We begin with the raw amino-acid sequence, 448 residues long: Tubulin beta chain (448 aa).

Residues glutamine 11, glutamate 69, serine 138, glycine 142, threonine 143, glycine 144, asparagine 204, and asparagine 226 each contribute to the GTP site. A Mg(2+)-binding site is contributed by glutamate 69.

The protein belongs to the tubulin family. As to quaternary structure, dimer of alpha and beta chains. A typical microtubule is a hollow water-filled tube with an outer diameter of 25 nm and an inner diameter of 15 nM. Alpha-beta heterodimers associate head-to-tail to form protofilaments running lengthwise along the microtubule wall with the beta-tubulin subunit facing the microtubule plus end conferring a structural polarity. Microtubules usually have 13 protofilaments but different protofilament numbers can be found in some organisms and specialized cells. Mg(2+) serves as cofactor.

The protein localises to the cytoplasm. Its subcellular location is the cytoskeleton. In terms of biological role, tubulin is the major constituent of microtubules, a cylinder consisting of laterally associated linear protofilaments composed of alpha- and beta-tubulin heterodimers. Microtubules grow by the addition of GTP-tubulin dimers to the microtubule end, where a stabilizing cap forms. Below the cap, tubulin dimers are in GDP-bound state, owing to GTPase activity of alpha-tubulin. The chain is Tubulin beta chain (TUB1) from Melampsora lini (Rust fungus).